The sequence spans 966 residues: Protein STICHEL-like 4 (966 aa).

2 disordered regions span residues 64 to 118 (RSLR…DRSS) and 200 to 237 (RDNA…REQN). The span at 75–84 (LKEDHQDSRE) shows a compositional bias: basic and acidic residues. A compositionally biased stretch (polar residues) spans 98–108 (PIVSFGTSKVT). Residues 109 to 118 (PSDEKFDRSS) show a composition bias toward basic and acidic residues. Residues 208–217 (SEMSIASNSV) are compositionally biased toward polar residues. A compositionally biased stretch (basic and acidic residues) spans 219–236 (RGEKYEGEEGGGGRDREQ). An ATP-binding site is contributed by 384 to 391 (GPNGTGKT). Zn(2+) is bound by residues C403, C412, C415, and C418. Positions 650–678 (SKEDMEKLKQALKTLSESEKQLRVSNDKL) form a coiled coil. Over residues 706–717 (FNHTPLTDSDPS) the composition is skewed to polar residues. Residues 706–733 (FNHTPLTDSDPSNHVVAGTRRDDSKQGF) form a disordered region.

The protein belongs to the DnaX/STICHEL family.

This chain is Protein STICHEL-like 4, found in Arabidopsis thaliana (Mouse-ear cress).